A 209-amino-acid polypeptide reads, in one-letter code: Pyridoxine/pyridoxamine 5'-phosphate oxidase (209 aa).

Substrate-binding positions include R7–Y10 and K64. FMN contacts are provided by residues R59–K64, F74–T75, R80, and K81. Substrate contacts are provided by Y121, R125, and S129. FMN-binding positions include Q138–S139 and W182. R188 to H190 contributes to the substrate binding site. R192 contacts FMN.

The protein belongs to the pyridoxamine 5'-phosphate oxidase family. As to quaternary structure, homodimer. FMN serves as cofactor.

It catalyses the reaction pyridoxamine 5'-phosphate + O2 + H2O = pyridoxal 5'-phosphate + H2O2 + NH4(+). The catalysed reaction is pyridoxine 5'-phosphate + O2 = pyridoxal 5'-phosphate + H2O2. It participates in cofactor metabolism; pyridoxal 5'-phosphate salvage; pyridoxal 5'-phosphate from pyridoxamine 5'-phosphate: step 1/1. Its pathway is cofactor metabolism; pyridoxal 5'-phosphate salvage; pyridoxal 5'-phosphate from pyridoxine 5'-phosphate: step 1/1. Functionally, catalyzes the oxidation of either pyridoxine 5'-phosphate (PNP) or pyridoxamine 5'-phosphate (PMP) into pyridoxal 5'-phosphate (PLP). The chain is Pyridoxine/pyridoxamine 5'-phosphate oxidase from Actinobacillus pleuropneumoniae serotype 7 (strain AP76).